Here is a 356-residue protein sequence, read N- to C-terminus: S-adenosylmethionine:tRNA ribosyltransferase-isomerase (356 aa).

The protein belongs to the QueA family. As to quaternary structure, monomer.

It localises to the cytoplasm. The catalysed reaction is 7-aminomethyl-7-carbaguanosine(34) in tRNA + S-adenosyl-L-methionine = epoxyqueuosine(34) in tRNA + adenine + L-methionine + 2 H(+). The protein operates within tRNA modification; tRNA-queuosine biosynthesis. Transfers and isomerizes the ribose moiety from AdoMet to the 7-aminomethyl group of 7-deazaguanine (preQ1-tRNA) to give epoxyqueuosine (oQ-tRNA). This chain is S-adenosylmethionine:tRNA ribosyltransferase-isomerase, found in Enterobacter sp. (strain 638).